The following is a 474-amino-acid chain: ATP synthase subunit beta 1 (474 aa).

Gly-157–Thr-164 serves as a coordination point for ATP.

Belongs to the ATPase alpha/beta chains family. As to quaternary structure, F-type ATPases have 2 components, CF(1) - the catalytic core - and CF(0) - the membrane proton channel. CF(1) has five subunits: alpha(3), beta(3), gamma(1), delta(1), epsilon(1). CF(0) has three main subunits: a(1), b(2) and c(9-12). The alpha and beta chains form an alternating ring which encloses part of the gamma chain. CF(1) is attached to CF(0) by a central stalk formed by the gamma and epsilon chains, while a peripheral stalk is formed by the delta and b chains.

It localises to the cell inner membrane. It catalyses the reaction ATP + H2O + 4 H(+)(in) = ADP + phosphate + 5 H(+)(out). Its function is as follows. Produces ATP from ADP in the presence of a proton gradient across the membrane. The catalytic sites are hosted primarily by the beta subunits. This Polaromonas naphthalenivorans (strain CJ2) protein is ATP synthase subunit beta 1.